We begin with the raw amino-acid sequence, 230 residues long: CDP-diacylglycerol--inositol 3-phosphatidyltransferase (230 aa).

Residues 1–28 (MPSAKSSDLSPTKTNLESTTKQKVSVQD) lie on the Cytoplasmic side of the membrane. The chain crosses the membrane as a helical span at residues 29–51 (IFLYIPNLIGYLRIITAIISFLC). The Lumenal segment spans residues 52–57 (MANHPV). The chain crosses the membrane as a helical span at residues 58–77 (ATLIFYGISGFLDAFDGYAA). Residues Asp70 and Asp73 each contribute to the Mg(2+) site. Residues Gly74, Arg78, and Thr84 each coordinate a CDP-1,2-diacyl-sn-glycerol. The Cytoplasmic segment spans residues 78-89 (RKFNQGTRFGAV). A helical membrane pass occupies residues 90 to 110 (LDMVTDRCATSSLIVYLGVLY). Positions 91 and 95 each coordinate Mg(2+). Catalysis depends on Asp95, which acts as the Proton acceptor. Over 111-112 (PQ) the chain is Lumenal. A helical transmembrane segment spans residues 113–133 (YTVFWQILVSLDLSSHYMHMY). Residues 134–161 (AMLSAGSTSHKNVDETQSKLLSLYYNNR) lie on the Cytoplasmic side of the membrane. The chain crosses the membrane as a helical span at residues 162-182 (LVLFFVCLINELFYMAVYLHY). Residues 183–184 (YK) are Lumenal-facing. A helical transmembrane segment spans residues 185-205 (FFWLGTVMLVASTPIWLFKQI). Residues 206–230 (ANIIQLKNASLILARMDAHDHSKRD) lie on the Cytoplasmic side of the membrane.

Belongs to the CDP-alcohol phosphatidyltransferase class-I family. Mn(2+) is required as a cofactor. Mg(2+) serves as cofactor.

The protein resides in the endoplasmic reticulum membrane. It carries out the reaction a CDP-1,2-diacyl-sn-glycerol + myo-inositol = a 1,2-diacyl-sn-glycero-3-phospho-(1D-myo-inositol) + CMP + H(+). Inhibited by calcium and zinc ions. Inhibited by nucleoside triphosphates and diphosphates. Catalyzes the synthesis of phosphatidylinositol (PtdIns). Required for proper membrane dynamics and cell wall integrity. The polypeptide is CDP-diacylglycerol--inositol 3-phosphatidyltransferase (Candida albicans (strain SC5314 / ATCC MYA-2876) (Yeast)).